A 127-amino-acid chain; its full sequence is Holo-[acyl-carrier-protein] synthase (127 aa).

Mg(2+) contacts are provided by aspartate 8 and glutamate 56.

Belongs to the P-Pant transferase superfamily. AcpS family. Mg(2+) serves as cofactor.

It is found in the cytoplasm. The enzyme catalyses apo-[ACP] + CoA = holo-[ACP] + adenosine 3',5'-bisphosphate + H(+). Transfers the 4'-phosphopantetheine moiety from coenzyme A to a Ser of acyl-carrier-protein. The protein is Holo-[acyl-carrier-protein] synthase of Caldanaerobacter subterraneus subsp. tengcongensis (strain DSM 15242 / JCM 11007 / NBRC 100824 / MB4) (Thermoanaerobacter tengcongensis).